A 117-amino-acid polypeptide reads, in one-letter code: MVQRLTYRRRLSYNTASNKTRLSRTPGNRIVYLYTKKVGKAPKSACGVLPGRLRGVVAVRPKVLMRLSKTKKHVQQGLWWLHVRQVCPDRIKRAFLIEEQKIVVKVLKAQAQSQKAK.

A Phosphoserine modification is found at serine 12. An N6-acetyllysine mark is found at lysine 36 and lysine 43. Lysine 108 participates in a covalent cross-link: Glycyl lysine isopeptide (Lys-Gly) (interchain with G-Cter in SUMO2).

The protein belongs to the eukaryotic ribosomal protein eL34 family. Component of the large ribosomal subunit.

Its subcellular location is the cytoplasm. The protein resides in the cytosol. It is found in the endoplasmic reticulum. In terms of biological role, component of the large ribosomal subunit. The ribosome is a large ribonucleoprotein complex responsible for the synthesis of proteins in the cell. The sequence is that of Large ribosomal subunit protein eL34 (Rpl34) from Rattus norvegicus (Rat).